The primary structure comprises 861 residues: Origin recognition complex subunit 1 (861 aa).

The 127-residue stretch at 45–171 folds into the BAH domain; the sequence is IHIQIGQFVL…EKKFRPLSSE (127 aa). A disordered region spans residues 183–233; that stretch reads AAKCQKPVRAKSKSAESPSWTPAEHVAKRIESRHSASKSRQTPTHPLTPRA. Phosphoserine is present on Ser199. Position 203 is a phosphothreonine (Thr203). The segment covering 207–216 has biased composition (basic and acidic residues); that stretch reads HVAKRIESRH. Residues Ser252, Ser255, Ser273, and Ser287 each carry the phosphoserine modification. The interval 269–312 is disordered; the sequence is SEITSPSKRSQPDKLQTLSPALKAPEKTRETGLSYTEDDKKASP. The segment covering 270 to 287 has biased composition (polar residues); it reads EITSPSKRSQPDKLQTLS. Position 326 is an N6-acetyllysine (Lys326). Thr337 carries the post-translational modification Phosphothreonine. A Phosphoserine modification is found at Ser340. Disordered regions lie at residues 360–382 and 412–476; these read KRDA…IRRK and PAAE…QIRS. Residues Ser417 and Ser420 each carry the phosphoserine modification. The segment covering 440-456 has biased composition (low complexity); the sequence is SRNLRSSLKSSLHTLTK. Residues 457 to 466 are compositionally biased toward basic residues; the sequence is VPKKSLKPRT. A Phosphoserine modification is found at Ser478. Residues Val500 and 534–542 contribute to the ATP site; that span reads GVPGTGKTA. A necessary and sufficient for ORC complex assembly region spans residues 501–861; the sequence is PESLPCREQE…DDVLYALKDE (361 aa). Residues Asp620 and Glu621 each coordinate Mg(2+). ATP-binding residues include Glu621, Asn654, and Arg720.

Belongs to the ORC1 family. In terms of assembly, component of ORC, a complex composed of at least 6 subunits: ORC1, ORC2, ORC3, ORC4, ORC5 and ORC6. ORC is regulated in a cell-cycle dependent manner. It is sequentially assembled at the exit from anaphase of mitosis and disassembled as cells enter S phase. Interacts with CDC6 and KAT7/HBO1. Interacts with LRWD1 predominantly during the G1 phase and with less affinity during mitosis, when phosphorylated. In terms of processing, phosphorylated during mitosis.

The protein resides in the nucleus. Its function is as follows. Component of the origin recognition complex (ORC) that binds origins of replication. DNA-binding is ATP-dependent. The DNA sequences that define origins of replication have not been identified yet. ORC is required to assemble the pre-replication complex necessary to initiate DNA replication. The sequence is that of Origin recognition complex subunit 1 (ORC1) from Homo sapiens (Human).